A 351-amino-acid polypeptide reads, in one-letter code: D-alanine--D-alanine ligase (351 aa).

The region spanning 141 to 349 (KAAFSAAGLP…ISQLVARLIE (209 aa)) is the ATP-grasp domain. ATP is bound at residue 176 to 231 (ETQLGYPCFIKPANLGSSVGISKAYDKKELLNGLDLAAQLDSRIVVEKNIKARELE). Mg(2+) is bound by residues aspartate 302, glutamate 316, and asparagine 318.

Belongs to the D-alanine--D-alanine ligase family. Mg(2+) is required as a cofactor. Requires Mn(2+) as cofactor.

It is found in the cytoplasm. It catalyses the reaction 2 D-alanine + ATP = D-alanyl-D-alanine + ADP + phosphate + H(+). It participates in cell wall biogenesis; peptidoglycan biosynthesis. Its function is as follows. Cell wall formation. The protein is D-alanine--D-alanine ligase of Prochlorococcus marinus (strain SARG / CCMP1375 / SS120).